Reading from the N-terminus, the 679-residue chain is Patatin-like phospholipase 1 (679 aa).

2 disordered regions span residues 19–45 (FSDDEKDDSYEREKQVYSGSETQNAEN) and 155–194 (GEYEKRNTSSYDNTESVQNTVGSEKEETENKNEETSNYNS). Composition is skewed to polar residues over residues 35–45 (YSGSETQNAEN) and 162–176 (TSSYDNTESVQNTVG). Residues 177–188 (SEKEETENKNEE) show a composition bias toward basic and acidic residues. The region spanning 338–544 (LSLDGGGILT…KASNPALIAL (207 aa)) is the PNPLA domain. The GXSXG signature appears at 381 to 385 (GTSAG). Ser-383 functions as the Nucleophile in the catalytic mechanism. The active-site Proton acceptor is Asp-531. Positions 531 to 533 (DGA) match the DGA/G motif.

It belongs to the patatin family.

It localises to the cytoplasm. It carries out the reaction a 1,2-diacyl-sn-glycero-3-phosphocholine + H2O = a 1-acyl-sn-glycero-3-phosphocholine + a fatty acid + H(+). It catalyses the reaction 1,2-dihexadecanoyl-sn-glycero-3-phosphocholine + H2O = 1-hexadecanoyl-sn-glycero-3-phosphocholine + hexadecanoate + H(+). Functionally, hydrolyzes the ester bond of the fatty acyl group attached at the sn-2 position of phospholipids such as phosphatidylcholine. Involved in gametogenesis; however, it is not clear whether it is involved in gametocytes development in host erythrocytes or in gametocyte activation in the mosquito midgut. Involved in gametocyte development in host erythrocytes; however, not involved in gametocytes activation including male gamete exflagellation. Involved in the rounding up of gametocytes following activation in the mosquito midgut; however, not required for gametocyte development in host erythrocytes. Required for exflagellation of activated male gametocytes. Involved in gametocytes egress from host erythrocytes by promoting the relocalization of perforin-like protein PLP2-containing vesicles to the periphery of gametocytes; PLP2 secretion is required for permeabilization of the erythrocyte membrane and thus, promotes gametocyte egress. Dispensable for asexual blood stage development. The protein is Patatin-like phospholipase 1 of Plasmodium falciparum (isolate NF54).